Consider the following 79-residue polypeptide: ATP synthase subunit c (79 aa).

Helical transmembrane passes span 10–30 (IAGA…IGVL) and 52–72 (FFIV…LAMY).

It belongs to the ATPase C chain family. F-type ATPases have 2 components, F(1) - the catalytic core - and F(0) - the membrane proton channel. F(1) has five subunits: alpha(3), beta(3), gamma(1), delta(1), epsilon(1). F(0) has three main subunits: a(1), b(2) and c(10-14). The alpha and beta chains form an alternating ring which encloses part of the gamma chain. F(1) is attached to F(0) by a central stalk formed by the gamma and epsilon chains, while a peripheral stalk is formed by the delta and b chains.

It is found in the cell inner membrane. In terms of biological role, f(1)F(0) ATP synthase produces ATP from ADP in the presence of a proton or sodium gradient. F-type ATPases consist of two structural domains, F(1) containing the extramembraneous catalytic core and F(0) containing the membrane proton channel, linked together by a central stalk and a peripheral stalk. During catalysis, ATP synthesis in the catalytic domain of F(1) is coupled via a rotary mechanism of the central stalk subunits to proton translocation. Functionally, key component of the F(0) channel; it plays a direct role in translocation across the membrane. A homomeric c-ring of between 10-14 subunits forms the central stalk rotor element with the F(1) delta and epsilon subunits. The polypeptide is ATP synthase subunit c (Thiobacillus denitrificans (strain ATCC 25259 / T1)).